A 550-amino-acid polypeptide reads, in one-letter code: Dihydroxy-acid dehydratase (550 aa).

Residue aspartate 78 coordinates Mg(2+). Residue cysteine 119 participates in [2Fe-2S] cluster binding. Mg(2+) contacts are provided by aspartate 120 and lysine 121. At lysine 121 the chain carries N6-carboxylysine. Cysteine 191 contributes to the [2Fe-2S] cluster binding site. Mg(2+) is bound at residue glutamate 440. Serine 466 serves as the catalytic Proton acceptor.

This sequence belongs to the IlvD/Edd family. Homodimer. [2Fe-2S] cluster serves as cofactor. Mg(2+) is required as a cofactor.

The enzyme catalyses (2R)-2,3-dihydroxy-3-methylbutanoate = 3-methyl-2-oxobutanoate + H2O. It carries out the reaction (2R,3R)-2,3-dihydroxy-3-methylpentanoate = (S)-3-methyl-2-oxopentanoate + H2O. It participates in amino-acid biosynthesis; L-isoleucine biosynthesis; L-isoleucine from 2-oxobutanoate: step 3/4. The protein operates within amino-acid biosynthesis; L-valine biosynthesis; L-valine from pyruvate: step 3/4. Its function is as follows. Functions in the biosynthesis of branched-chain amino acids. Catalyzes the dehydration of (2R,3R)-2,3-dihydroxy-3-methylpentanoate (2,3-dihydroxy-3-methylvalerate) into 2-oxo-3-methylpentanoate (2-oxo-3-methylvalerate) and of (2R)-2,3-dihydroxy-3-methylbutanoate (2,3-dihydroxyisovalerate) into 2-oxo-3-methylbutanoate (2-oxoisovalerate), the penultimate precursor to L-isoleucine and L-valine, respectively. This chain is Dihydroxy-acid dehydratase, found in Methanococcus maripaludis (strain DSM 14266 / JCM 13030 / NBRC 101832 / S2 / LL).